Here is a 45-residue protein sequence, read N- to C-terminus: Photosystem II reaction center protein K (45 aa).

Positions 1 to 8 (MNSALFLA) are excised as a propeptide. The chain crosses the membrane as a helical span at residues 23–43 (ILPVIPVFFLLLAFVWQAAIG).

This sequence belongs to the PsbK family. PSII is composed of 1 copy each of membrane proteins PsbA, PsbB, PsbC, PsbD, PsbE, PsbF, PsbH, PsbI, PsbJ, PsbK, PsbL, PsbM, PsbT, PsbX, PsbY, PsbZ, Psb30/Ycf12, at least 3 peripheral proteins of the oxygen-evolving complex and a large number of cofactors. It forms dimeric complexes.

It is found in the plastid. The protein localises to the chloroplast thylakoid membrane. One of the components of the core complex of photosystem II (PSII). PSII is a light-driven water:plastoquinone oxidoreductase that uses light energy to abstract electrons from H(2)O, generating O(2) and a proton gradient subsequently used for ATP formation. It consists of a core antenna complex that captures photons, and an electron transfer chain that converts photonic excitation into a charge separation. This chain is Photosystem II reaction center protein K, found in Porphyra purpurea (Red seaweed).